The sequence spans 439 residues: UPF0489 protein C5orf22 homolog (439 aa).

The tract at residues 163 to 219 (TTKLENGQSGAKIPKAAQTQDDMQSKADTPCTSSSQPPDGSAASGNISETAKKKADD) is disordered. A compositionally biased stretch (polar residues) spans 179–211 (AQTQDDMQSKADTPCTSSSQPPDGSAASGNISE).

Belongs to the UPF0489 family.

This is UPF0489 protein C5orf22 homolog from Danio rerio (Zebrafish).